Reading from the N-terminus, the 132-residue chain is CLAVATA3/ESR (CLE)-related protein TDIF (132 aa).

A signal peptide spans 1-26 (MDIDLLWSFGGWFFILFPETINYCMA). The helical transmembrane segment at 42-62 (SCSSLFFVALLIITILITMLQ) threads the bilayer. Polar residues predominate over residues 68 to 77 (EVTSLPTHQP). The tract at residues 68-132 (EVTSLPTHQP…PSGPNPISNR (65 aa)) is disordered. Residues 87–96 (STSSTATTTT) are compositionally biased toward low complexity. Residues 101–111 (KRTHHQSHPKP) are compositionally biased toward basic residues. Hydroxyproline occurs at positions 123 and 126. Pro126 carries an O-linked (Ara...) hydroxyproline glycan.

This sequence belongs to the CLV3/ESR signal peptide family. As to quaternary structure, interacts specifically with the leucine-rich repeat receptor-like protein kinase TDR. Post-translationally, the TDIFp peptide contains two hydroxprolines, but hydroxylation had no direct effect on TDIFp activity. The O-glycosylation (arabinosylation) of the hydroxyproline Pro-126 enhances binding affinity of the TDIFp peptide for its receptor.

The protein localises to the secreted. It localises to the extracellular space. Its subcellular location is the cell membrane. Extracellular signal peptide that regulates cell fate. Represses tracheary element differentiation but promotes the formation of procambial cells adjacent to phloem cells in the veins. In Zinnia elegans (Garden zinnia), this protein is CLAVATA3/ESR (CLE)-related protein TDIF.